A 138-amino-acid chain; its full sequence is MRTLWIMAVLLVGVEGSLIEFAKMILEETKRLPFPYYTTYGCYCGWGGQGQPKDATDRCCFVHDCCYGKLSNCKPKTDRYSYSRKSGVIICGEGTPCEKQICECDKAAAVCFRENLRTYKKRYMAYPDLLCKKPAEKC.

The first 16 residues, 1–16, serve as a signal peptide directing secretion; sequence MRTLWIMAVLLVGVEG. 7 cysteine pairs are disulfide-bonded: C42-C131, C44-C60, C59-C111, C65-C138, C66-C104, C73-C97, and C91-C102. Residues Y43, G45, and G47 each contribute to the Ca(2+) site. Residue H63 is part of the active site. D64 is a binding site for Ca(2+). Residue D105 is part of the active site.

This sequence belongs to the phospholipase A2 family. Group II subfamily. D49 sub-subfamily. Monomer. Homodimer; non-covalently linked (alternative/compact dimer conformation). It depends on Ca(2+) as a cofactor. As to expression, expressed by the venom gland.

The protein localises to the secreted. It catalyses the reaction a 1,2-diacyl-sn-glycero-3-phosphocholine + H2O = a 1-acyl-sn-glycero-3-phosphocholine + a fatty acid + H(+). High level of membrane cholesterol content reduces cytolytic activity, whereas low level of membrane cholesterol content increases cytolytic activity. Its function is as follows. Snake venom phospholipase A2 (PLA2) that displays local myotoxic activity. It also displays anticoagulant action in plasma and edema-inducing activities. In addition, it shows cytotoxic activity to a variety of cell types and bactericidal activity to a variety of Gram-negative and Gram-positive bacteria. PLA2 catalyzes the calcium-dependent hydrolysis of the 2-acyl groups in 3-sn-phosphoglycerides. The protein is Basic phospholipase A2 myotoxin I of Bothrops asper (Terciopelo).